The chain runs to 432 residues: MQLLTIGINHHTAPVALRERVAFPLEQIKPALSTFKSVFLGHPAPNAPEAAILSTCNRTELYCATDDRAARDAAIRWMSDYHRIPADELAPHVYALPQSEAVRHAFRVASGLDSMVLGETQILGQMKNAVRTASEAGSLGTYLNQLFQRTFAVAKEVRGTTEIGAQSVSMAAAAVRLAQRIFEQVAQQRVLFIGAGEMIELCATHFAAQGPRELVVANRTAERGAKLAERFGGRAMPLSDLPARMHEFDIIVSCTASTLPIIGLGAVERAVKARRHRPIFMVDLAVPRDIEPEVGKLKDVFLYTVDDLGAIVREGNASRQAAVAQAEAIIETRVQNFMQWLDARSIVPVIRHMHTQADALRRAELERARKMLARGDDPAAVLDALSQALTNKLIHGPTSALNRANGADRDSLIDLMRGFYQHAPRSSDTSDH.

Substrate-binding positions include 55–58, S114, 119–121, and Q125; these read TCNR and ETQ. The active-site Nucleophile is the C56. 194–199 is a binding site for NADP(+); the sequence is GAGEMI.

It belongs to the glutamyl-tRNA reductase family. Homodimer.

The catalysed reaction is (S)-4-amino-5-oxopentanoate + tRNA(Glu) + NADP(+) = L-glutamyl-tRNA(Glu) + NADPH + H(+). The protein operates within porphyrin-containing compound metabolism; protoporphyrin-IX biosynthesis; 5-aminolevulinate from L-glutamyl-tRNA(Glu): step 1/2. Its function is as follows. Catalyzes the NADPH-dependent reduction of glutamyl-tRNA(Glu) to glutamate 1-semialdehyde (GSA). This Burkholderia thailandensis (strain ATCC 700388 / DSM 13276 / CCUG 48851 / CIP 106301 / E264) protein is Glutamyl-tRNA reductase.